Here is a 171-residue protein sequence, read N- to C-terminus: Mitochondrial import inner membrane translocase subunit Tim17-A (171 aa).

Cysteine 9 and cysteine 78 form a disulfide bridge. 3 helical membrane-spanning segments follow: residues 17 to 37, 63 to 77, and 113 to 133; these read CGGAFTMGTIGGGIFQAFKGF, GGSFAVWGGLFSTID, and VGSAAMGGILLALIEGAGILL. The segment at 144 to 171 is disordered; it reads GPQFTEDHSQLPSSQLPSSPFGDYRQYQ. Low complexity predominate over residues 153–163; the sequence is QLPSSQLPSSP.

It belongs to the Tim17/Tim22/Tim23 family. In terms of assembly, component of the TIM23 complex at least composed of TIMM23, TIMM17 (TIMM17A or TIMM17B) and TIMM50. The complex interacts with the TIMM44 component of the PAM complex and with DNAJC15. In terms of processing, degraded by YMEL1 downstream of the integrated stress response (ISR).

Its subcellular location is the mitochondrion inner membrane. Essential component of the TIM23 complex, a complex that mediates the translocation of transit peptide-containing proteins across the mitochondrial inner membrane. The protein is Mitochondrial import inner membrane translocase subunit Tim17-A (Timm17a) of Mus musculus (Mouse).